We begin with the raw amino-acid sequence, 644 residues long: Protein cueball (644 aa).

The N-terminal stretch at 1-26 (MIRIRFGMDVLLVLLLATCLLTPAHG) is a signal peptide. Over 27–531 (TPLEWDFAVT…VCLTPRVWTS (505 aa)) the chain is Extracellular. Asn-82 and Asn-108 each carry an N-linked (GlcNAc...) asparagine glycan. 3 LDL-receptor class B repeats span residues 121–166 (MNLF…DVCR), 167–211 (RKLY…DQLS), and 212–257 (DRLF…TNDA). Residues Asn-175 and Asn-190 are each glycosylated (N-linked (GlcNAc...) asparagine). Residues 280 to 301 (TTTSKPEEEDSTDSTDFTDPEP) form a disordered region. The span at 286-301 (EEEDSTDSTDFTDPEP) shows a compositional bias: acidic residues. An N-linked (GlcNAc...) asparagine glycan is attached at Asn-313. 2 consecutive EGF-like domains span residues 398-430 (EIRE…FTGE) and 433-471 (ELSV…ARCE). Intrachain disulfides connect Cys-402-Cys-411, Cys-406-Cys-421, Cys-437-Cys-447, Cys-441-Cys-459, and Cys-461-Cys-470. N-linked (GlcNAc...) asparagine glycans are attached at residues Asn-473 and Asn-508. A helical membrane pass occupies residues 532-552 (SVIIILVVGIVSSLLLVAVIV). Over 553-644 (HGIRRLYKPK…LIHNMEDDLY (92 aa)) the chain is Cytoplasmic.

It belongs to the cueball family.

The protein localises to the cell membrane. Has a role in spermatogenesis and oogenesis. The protein is Protein cueball of Drosophila sechellia (Fruit fly).